Here is a 294-residue protein sequence, read N- to C-terminus: Small ribosomal subunit protein uS2 (294 aa).

Basic and acidic residues predominate over residues 232-245 (RAAEQDKAADDKAQ). Residues 232 to 294 (RAAEQDKAAD…GSEEDGEAAN (63 aa)) are disordered. The segment covering 246-265 (EQAAAEAAKPEPAAPAPAAE) has biased composition (low complexity).

This sequence belongs to the universal ribosomal protein uS2 family.

In Desulfatibacillum aliphaticivorans, this protein is Small ribosomal subunit protein uS2.